The primary structure comprises 354 residues: Phospho-N-acetylmuramoyl-pentapeptide-transferase (354 aa).

A run of 10 helical transmembrane segments spans residues 27-47 (ATLL…INML), 73-93 (TMGG…WMDV), 97-117 (LVWA…LDDY), 138-158 (FVVA…YVPV), 162-182 (LYVP…VGAG), 193-213 (GLAI…AYLA), 230-250 (AGEL…FLWF), 256-276 (AVFM…VIAV), 282-302 (IVLA…IVQV), and 331-351 (TVVI…LATL).

Belongs to the glycosyltransferase 4 family. MraY subfamily. Mg(2+) is required as a cofactor.

The protein resides in the cell inner membrane. It carries out the reaction UDP-N-acetyl-alpha-D-muramoyl-L-alanyl-gamma-D-glutamyl-meso-2,6-diaminopimeloyl-D-alanyl-D-alanine + di-trans,octa-cis-undecaprenyl phosphate = di-trans,octa-cis-undecaprenyl diphospho-N-acetyl-alpha-D-muramoyl-L-alanyl-D-glutamyl-meso-2,6-diaminopimeloyl-D-alanyl-D-alanine + UMP. Its pathway is cell wall biogenesis; peptidoglycan biosynthesis. Functionally, catalyzes the initial step of the lipid cycle reactions in the biosynthesis of the cell wall peptidoglycan: transfers peptidoglycan precursor phospho-MurNAc-pentapeptide from UDP-MurNAc-pentapeptide onto the lipid carrier undecaprenyl phosphate, yielding undecaprenyl-pyrophosphoryl-MurNAc-pentapeptide, known as lipid I. The polypeptide is Phospho-N-acetylmuramoyl-pentapeptide-transferase (Novosphingobium aromaticivorans (strain ATCC 700278 / DSM 12444 / CCUG 56034 / CIP 105152 / NBRC 16084 / F199)).